The following is a 358-amino-acid chain: Phospho-N-acetylmuramoyl-pentapeptide-transferase (358 aa).

10 helical membrane-spanning segments follow: residues 28 to 48 (WALATALLVSIVVGPRFIAWL), 72 to 92 (TMGGLLIGFAVTFSVLLWADL), 96 to 116 (YIWLTLLVFTGFGFIGFLDDY), 133 to 153 (FLWQVGVAVAAMYLLVQLPAY), 164 to 184 (GLTPDLGWLYIPFAVAVMVGS), 196 to 216 (GLAIGPTIVAGIVFSIFIYVA), 233 to 253 (VGEVAVFCGALVGAGLGFLWF), 260 to 280 (VFMGDVGSLSLGGTLGFLAVL), 285 to 305 (LLLLVVGGLFVVETLSVILQV), and 335 to 355 (KIIIRFWITSALLGLIALSVL).

It belongs to the glycosyltransferase 4 family. MraY subfamily. It depends on Mg(2+) as a cofactor.

The protein localises to the cell inner membrane. The catalysed reaction is UDP-N-acetyl-alpha-D-muramoyl-L-alanyl-gamma-D-glutamyl-meso-2,6-diaminopimeloyl-D-alanyl-D-alanine + di-trans,octa-cis-undecaprenyl phosphate = di-trans,octa-cis-undecaprenyl diphospho-N-acetyl-alpha-D-muramoyl-L-alanyl-D-glutamyl-meso-2,6-diaminopimeloyl-D-alanyl-D-alanine + UMP. The protein operates within cell wall biogenesis; peptidoglycan biosynthesis. Functionally, catalyzes the initial step of the lipid cycle reactions in the biosynthesis of the cell wall peptidoglycan: transfers peptidoglycan precursor phospho-MurNAc-pentapeptide from UDP-MurNAc-pentapeptide onto the lipid carrier undecaprenyl phosphate, yielding undecaprenyl-pyrophosphoryl-MurNAc-pentapeptide, known as lipid I. This Nitratidesulfovibrio vulgaris (strain ATCC 29579 / DSM 644 / CCUG 34227 / NCIMB 8303 / VKM B-1760 / Hildenborough) (Desulfovibrio vulgaris) protein is Phospho-N-acetylmuramoyl-pentapeptide-transferase.